Consider the following 251-residue polypeptide: Prolactin-7C1 (251 aa).

An N-terminal signal peptide occupies residues 1–30 (MLLSLTHPSFLAMLPMLLMSNLLQWEGVTS). Asparagine 57 carries an N-linked (GlcNAc...) asparagine glycan. 2 disulfides stabilise this stretch: cysteine 101–cysteine 217 and cysteine 234–cysteine 242.

It belongs to the somatotropin/prolactin family. Expressed exclusively in the placenta. Expressed in spongiotrophoblast cells and trophoblast giant cells of the junctional zone and in labyrinthine trophoblast.

It is found in the secreted. This Mus musculus (Mouse) protein is Prolactin-7C1 (Prl7c1).